Consider the following 242-residue polypeptide: DNA repair protein RecO (242 aa).

Belongs to the RecO family.

Involved in DNA repair and RecF pathway recombination. The polypeptide is DNA repair protein RecO (Dechloromonas aromatica (strain RCB)).